A 435-amino-acid chain; its full sequence is 3-phosphoshikimate 1-carboxyvinyltransferase (435 aa).

Lys22, Ser23, and Arg27 together coordinate 3-phosphoshikimate. A phosphoenolpyruvate-binding site is contributed by Lys22. Residues Gly95 and Arg123 each contribute to the phosphoenolpyruvate site. Residues Ser168, Gln170, Asp319, and Lys346 each contribute to the 3-phosphoshikimate site. Gln170 is a binding site for phosphoenolpyruvate. The active-site Proton acceptor is the Asp319. 2 residues coordinate phosphoenolpyruvate: Arg350 and Arg393.

This sequence belongs to the EPSP synthase family. As to quaternary structure, monomer.

It localises to the cytoplasm. It carries out the reaction 3-phosphoshikimate + phosphoenolpyruvate = 5-O-(1-carboxyvinyl)-3-phosphoshikimate + phosphate. Its pathway is metabolic intermediate biosynthesis; chorismate biosynthesis; chorismate from D-erythrose 4-phosphate and phosphoenolpyruvate: step 6/7. Functionally, catalyzes the transfer of the enolpyruvyl moiety of phosphoenolpyruvate (PEP) to the 5-hydroxyl of shikimate-3-phosphate (S3P) to produce enolpyruvyl shikimate-3-phosphate and inorganic phosphate. In Chloroflexus aurantiacus (strain ATCC 29364 / DSM 637 / Y-400-fl), this protein is 3-phosphoshikimate 1-carboxyvinyltransferase.